Reading from the N-terminus, the 251-residue chain is Cyclohexanol dehydrogenase (251 aa).

6 residues coordinate NAD(+): D42, N95, Y161, K165, I194, and T196. The active-site Proton acceptor is Y161.

It belongs to the short-chain dehydrogenases/reductases (SDR) family.

The catalysed reaction is cyclohexanol + NAD(+) = cyclohexanone + NADH + H(+). Its function is as follows. Catalyzes the oxidation of cyclohexanol to cyclohexanone. Required for the conversion of cyclohexanol to adipic acid. This chain is Cyclohexanol dehydrogenase, found in Acinetobacter sp. (strain SE19).